The sequence spans 295 residues: MTDENIRQIAFYGKGGIGKSTTSQNTLAAMAEMGQRIMIVGCDPKADSTRLMLHSKAQTTVLHLAAERGAVEDLELHEVMLTGFRGVKCVESGGPEPGVGCAGRGIITAINFLEENGAYQDLDFVSYDVLGDVVCGGFAMPIREGKAQEIYIVTSGEMMAMYAANNIARGILKYAHSGGVRLGGLICNSRKVDREDELIMNLAERLNTQMIHFVPRDNIVQHAELRRMTVNEYAPDSNQGQEYRALAKKIINNDKLTIPTPMEMDELEALLIEYGLLDDDTKHSEIIGKPAEATK.

An ATP-binding site is contributed by 13 to 20 (GKGGIGKS). A [4Fe-4S] cluster-binding site is contributed by C101. At R104 the chain carries ADP-ribosylarginine; by dinitrogenase reductase ADP-ribosyltransferase. C135 lines the [4Fe-4S] cluster pocket.

It belongs to the NifH/BchL/ChlL family. As to quaternary structure, homodimer. The cofactor is [4Fe-4S] cluster. In terms of processing, the reversible ADP-ribosylation of Arg-104 inactivates the nitrogenase reductase and regulates nitrogenase activity.

It catalyses the reaction N2 + 8 reduced [2Fe-2S]-[ferredoxin] + 16 ATP + 16 H2O = H2 + 8 oxidized [2Fe-2S]-[ferredoxin] + 2 NH4(+) + 16 ADP + 16 phosphate + 6 H(+). Functionally, the key enzymatic reactions in nitrogen fixation are catalyzed by the nitrogenase complex, which has 2 components: the iron protein and the molybdenum-iron protein. The chain is Nitrogenase iron protein 1 (nifH1) from Nostoc sp. (strain PCC 7120 / SAG 25.82 / UTEX 2576).